Consider the following 265-residue polypeptide: Uronate dehydrogenase (265 aa).

Residues 12–13 (QL), 32–34 (DLS), 49–50 (DL), and 69–73 (LGGIS) each bind NAD(+). Substrate is bound by residues Ser-73 and 109–111 (SNH). Tyr-134 acts as the Proton acceptor in catalysis. Position 138 (Lys-138) interacts with NAD(+). Residue Ser-163 coordinates substrate. Residue Cys-164 participates in NAD(+) binding. Residue Arg-172 coordinates substrate.

Belongs to the NAD(P)-dependent epimerase/dehydratase family. Homohexamer.

The catalysed reaction is beta-D-galacturonate + NAD(+) = D-galactaro-1,5-lactone + NADH + H(+). It carries out the reaction beta-D-glucuronate + NAD(+) = D-glucaro-1,5-lactone + NADH + H(+). It functions in the pathway carbohydrate acid metabolism; D-galacturonate degradation via prokaryotic oxidative pathway. Catalyzes the oxidation of D-galacturonate and D-glucuronate to galactarate and D-glucarate, respectively. In fact, in water solution the substrate D-galacturonate is predominantly in pyranosic form whose beta anomer is converted by the enzyme to D-galactaro-1,5-lactone; in solution, this reaction product rearranges to the more stable D-galactaro-1,4-lactone. Makes part of the oxidative degradation pathway of D-galacturonate, which allows A.tumefaciens to utilize D-galacturonate as a sole carbon source. Cannot use NADP(+) instead of NAD(+) as cosubstrate. Is not active on D-galactose, D-glucose, D-galactonate and D-gluconate. This chain is Uronate dehydrogenase (udh), found in Agrobacterium fabrum (strain C58 / ATCC 33970) (Agrobacterium tumefaciens (strain C58)).